The primary structure comprises 173 residues: Large ribosomal subunit protein uL10 (173 aa).

The protein belongs to the universal ribosomal protein uL10 family. Part of the ribosomal stalk of the 50S ribosomal subunit. The N-terminus interacts with L11 and the large rRNA to form the base of the stalk. The C-terminus forms an elongated spine to which L12 dimers bind in a sequential fashion forming a multimeric L10(L12)X complex.

Its function is as follows. Forms part of the ribosomal stalk, playing a central role in the interaction of the ribosome with GTP-bound translation factors. The chain is Large ribosomal subunit protein uL10 from Chlorobaculum tepidum (strain ATCC 49652 / DSM 12025 / NBRC 103806 / TLS) (Chlorobium tepidum).